The sequence spans 113 residues: Non-structural protein 1 (113 aa).

Belongs to the pneumovirus non-structural protein 1 family.

The protein resides in the host cytoplasm. The protein localises to the host mitochondrion. Functionally, may play a minor role in antagonizing the type I IFN-mediated antiviral response. Additionally, NS1 may serve some inhibitory role in viral transcription and RNA replication. The protein is Non-structural protein 1 (1C) of Mus musculus (Mouse).